The primary structure comprises 144 residues: UPF0102 protein BURPS1106A_3900 (144 aa).

A disordered region spans residues 1 to 28 (MCHAREASPGTGEPEAAPRDNFPRAAGS).

This sequence belongs to the UPF0102 family.

The polypeptide is UPF0102 protein BURPS1106A_3900 (Burkholderia pseudomallei (strain 1106a)).